A 498-amino-acid polypeptide reads, in one-letter code: L-xylulose/3-keto-L-gulonate kinase (498 aa).

Belongs to the FGGY kinase family. In terms of assembly, homodimer.

The enzyme catalyses L-xylulose + ATP = L-xylulose 5-phosphate + ADP + H(+). It catalyses the reaction 3-dehydro-L-gulonate + ATP = 3-dehydro-L-gulonate 6-phosphate + ADP + H(+). Catalyzes the phosphorylation of L-xylulose and 3-keto-L-gulonate. Is involved in L-lyxose utilization via xylulose, and may also be involved in the utilization of 2,3-diketo-L-gulonate. In Escherichia coli (strain K12), this protein is L-xylulose/3-keto-L-gulonate kinase (lyx).